A 193-amino-acid polypeptide reads, in one-letter code: Cytochrome c biogenesis ATP-binding export protein CcmA (193 aa).

Positions 9–191 constitute an ABC transporter domain; the sequence is LSASGLAILR…AAGFPVTAEV (183 aa). 41-48 contacts ATP; sequence GANGAGKT.

It belongs to the ABC transporter superfamily. CcmA exporter (TC 3.A.1.107) family. In terms of assembly, the complex is composed of two ATP-binding proteins (CcmA) and two transmembrane proteins (CcmB).

The protein localises to the cell inner membrane. It carries out the reaction heme b(in) + ATP + H2O = heme b(out) + ADP + phosphate + H(+). Functionally, part of the ABC transporter complex CcmAB involved in the biogenesis of c-type cytochromes; once thought to export heme, this seems not to be the case, but its exact role is uncertain. Responsible for energy coupling to the transport system. This chain is Cytochrome c biogenesis ATP-binding export protein CcmA, found in Hyphomonas neptunium (strain ATCC 15444).